Here is an 893-residue protein sequence, read N- to C-terminus: Ubiquitin-like protease 2 (893 aa).

The protease stretch occupies residues 538 to 800 (PVVLLVKDIK…YNLILQQADK (263 aa)). Catalysis depends on residues histidine 644, aspartate 678, and cysteine 743.

The protein belongs to the peptidase C48 family.

The protein resides in the nucleus. It localises to the cytoplasm. The protein localises to the cytosol. Its function is as follows. Protease that catalyzes two essential functions in the smo-1 pathway: processing of full-length smo-1 to their mature forms and deconjugation of smo-1 from targeted proteins. May deconjugate smo-1 from the cadherin protein hmr-1 and plays a role in its recruitment to and the maintenance of adherens junctions. Required for epidermal morphogenesis during embryonic development. The protein is Ubiquitin-like protease 2 of Caenorhabditis elegans.